The following is a 581-amino-acid chain: Proline--tRNA ligase (581 aa).

Belongs to the class-II aminoacyl-tRNA synthetase family. ProS type 1 subfamily. Homodimer.

The protein localises to the cytoplasm. The catalysed reaction is tRNA(Pro) + L-proline + ATP = L-prolyl-tRNA(Pro) + AMP + diphosphate. Functionally, catalyzes the attachment of proline to tRNA(Pro) in a two-step reaction: proline is first activated by ATP to form Pro-AMP and then transferred to the acceptor end of tRNA(Pro). As ProRS can inadvertently accommodate and process non-cognate amino acids such as alanine and cysteine, to avoid such errors it has two additional distinct editing activities against alanine. One activity is designated as 'pretransfer' editing and involves the tRNA(Pro)-independent hydrolysis of activated Ala-AMP. The other activity is designated 'posttransfer' editing and involves deacylation of mischarged Ala-tRNA(Pro). The misacylated Cys-tRNA(Pro) is not edited by ProRS. This chain is Proline--tRNA ligase, found in Paracidovorax citrulli (strain AAC00-1) (Acidovorax citrulli).